Reading from the N-terminus, the 239-residue chain is MEGTAESQTPDLRDVEGKVGRKTPEGLLRGLRGECDLGTSGDVLLPGASSTGHGLGDKIMALRMELAYLRAIDVKILQQLVTLNEGIEAVRWLLEERGTLTSHCSSLTSSQYSLTGGSPERSRRGSWDSLPDTSSTDRLDSVSIGSFLDTVAPRELDEQGHPGPSCPEIDWAKVIPSEDRARTEVDMTSTKLGSLTATWKLPGDGLQCGPPEPSEDDSAKQGFEAHWYWGQCQDDVTFL.

LRR repeat units lie at residues 55 to 83 (LGDK…LVTL) and 93 to 114 (LLEE…QYSL). The span at 107-118 (LTSSQYSLTGGS) shows a compositional bias: low complexity. The tract at residues 107-140 (LTSSQYSLTGGSPERSRRGSWDSLPDTSSTDRLD) is disordered. 3 positions are modified to phosphoserine: Ser118, Ser126, and Ser129.

Forms a tripartite complex with CDC42BPA/CDC42BPB and MYO18A acting as an adapter connecting both. Its binding to CDC42BPA/CDC42BPB results in their activation by abolition of their negative autoregulation. Interacts with CDC42BPA and CDC42BPB. Phosphorylated.

The protein localises to the cytoplasm. Functionally, acts as an activator of the canonical NF-kappa-B pathway and drive the production of pro-inflammatory cytokines. Promotes the antigen (Ag)-presenting and priming function of dendritic cells via the canonical NF-kappa-B pathway. In concert with MYO18A and CDC42BPA/CDC42BPB, is involved in modulating lamellar actomyosin retrograde flow that is crucial to cell protrusion and migration. Activates CDC42BPA/CDC42BPB and targets it to actomyosin through its interaction with MYO18A, leading to MYL9/MLC2 phosphorylation and MYH9/MYH10-dependent actomyosin assembly in the lamella. This Rattus norvegicus (Rat) protein is Leucine rich adaptor protein 1 (Lurap1).